The chain runs to 38 residues: MSMRLVVVLLPLGIALGWAVYNIGKLAIEQWRRTGSKV.

Residues 1–4 are Lumenal-facing; sequence MSMR. A helical transmembrane segment spans residues 5 to 23; sequence LVVVLLPLGIALGWAVYNI. The Stromal segment spans residues 24 to 38; the sequence is GKLAIEQWRRTGSKV.

The protein belongs to the PsbY family. In terms of assembly, PSII is composed of 1 copy each of membrane proteins PsbA, PsbB, PsbC, PsbD, PsbE, PsbF, PsbH, PsbI, PsbJ, PsbK, PsbL, PsbM, PsbT, PsbX, PsbY, PsbZ, Psb30/Ycf12, at least 3 peripheral proteins of the oxygen-evolving complex and a large number of cofactors. It forms dimeric complexes.

Its subcellular location is the plastid. The protein localises to the cyanelle thylakoid membrane. Functionally, loosely associated component of the core of photosystem II (PSII), it is not always seen in crystals. PSII is a light-driven water plastoquinone oxidoreductase, using light energy to abstract electrons from H(2)O, generating a proton gradient subsequently used for ATP formation. In Cyanophora paradoxa, this protein is Photosystem II reaction center protein Y.